We begin with the raw amino-acid sequence, 153 residues long: 6,7-dimethyl-8-ribityllumazine synthase (153 aa).

Residues Phe22, 56–58 (AFE), and 80–82 (CVI) each bind 5-amino-6-(D-ribitylamino)uracil. Residue 85–86 (AT) participates in (2S)-2-hydroxy-3-oxobutyl phosphate binding. Catalysis depends on His88, which acts as the Proton donor. Phe113 is a 5-amino-6-(D-ribitylamino)uracil binding site. A (2S)-2-hydroxy-3-oxobutyl phosphate-binding site is contributed by Arg127.

This sequence belongs to the DMRL synthase family.

The catalysed reaction is (2S)-2-hydroxy-3-oxobutyl phosphate + 5-amino-6-(D-ribitylamino)uracil = 6,7-dimethyl-8-(1-D-ribityl)lumazine + phosphate + 2 H2O + H(+). Its pathway is cofactor biosynthesis; riboflavin biosynthesis; riboflavin from 2-hydroxy-3-oxobutyl phosphate and 5-amino-6-(D-ribitylamino)uracil: step 1/2. Its function is as follows. Catalyzes the formation of 6,7-dimethyl-8-ribityllumazine by condensation of 5-amino-6-(D-ribitylamino)uracil with 3,4-dihydroxy-2-butanone 4-phosphate. This is the penultimate step in the biosynthesis of riboflavin. In Endomicrobium trichonymphae, this protein is 6,7-dimethyl-8-ribityllumazine synthase.